A 633-amino-acid chain; its full sequence is Probable potassium transport system protein Kup (633 aa).

The next 12 membrane-spanning stretches (helical) occupy residues 19-39 (LGML…SPLY), 61-81 (ILAL…VLFI), 112-132 (VLVI…MITP), 148-168 (SGLE…LFLI), 179-199 (LFGP…INGI), 217-237 (FFIV…LALT), 258-278 (WFAL…ALLL), 290-310 (LLAP…ATVI), 348-368 (IYIG…VLGF), 380-400 (VAVT…MLLL), 405-425 (PVLA…FFAA), and 430-450 (IFQG…LMTT).

Belongs to the HAK/KUP transporter (TC 2.A.72) family.

The protein resides in the cell inner membrane. The catalysed reaction is K(+)(in) + H(+)(in) = K(+)(out) + H(+)(out). Its function is as follows. Transport of potassium into the cell. Likely operates as a K(+):H(+) symporter. The polypeptide is Probable potassium transport system protein Kup (Pseudomonas fluorescens (strain ATCC BAA-477 / NRRL B-23932 / Pf-5)).